The following is a 278-amino-acid chain: Phosphatidylglycerol--prolipoprotein diacylglyceryl transferase (278 aa).

4 helical membrane passes run Trp19–Gly39, Phe49–Val69, Ile86–Ile106, and Met112–Ile132. Arg134 lines the a 1,2-diacyl-sn-glycero-3-phospho-(1'-sn-glycerol) pocket. A run of 3 helical transmembrane segments spans residues Gln174–Leu194, Gly204–Met224, and Ile235–Tyr255.

It belongs to the Lgt family.

The protein localises to the cell membrane. It carries out the reaction L-cysteinyl-[prolipoprotein] + a 1,2-diacyl-sn-glycero-3-phospho-(1'-sn-glycerol) = an S-1,2-diacyl-sn-glyceryl-L-cysteinyl-[prolipoprotein] + sn-glycerol 1-phosphate + H(+). Its pathway is protein modification; lipoprotein biosynthesis (diacylglyceryl transfer). Its function is as follows. Catalyzes the transfer of the diacylglyceryl group from phosphatidylglycerol to the sulfhydryl group of the N-terminal cysteine of a prolipoprotein, the first step in the formation of mature lipoproteins. The protein is Phosphatidylglycerol--prolipoprotein diacylglyceryl transferase of Lactobacillus johnsonii (strain CNCM I-12250 / La1 / NCC 533).